The following is a 419-amino-acid chain: UDP-N-acetylglucosamine 1-carboxyvinyltransferase (419 aa).

22-23 (KN) provides a ligand contact to phosphoenolpyruvate. Arginine 93 is a binding site for UDP-N-acetyl-alpha-D-glucosamine. The Proton donor role is filled by cysteine 117. Residue cysteine 117 is modified to 2-(S-cysteinyl)pyruvic acid O-phosphothioketal. Residues 122 to 126 (RPVDL), aspartate 308, and isoleucine 330 each bind UDP-N-acetyl-alpha-D-glucosamine.

This sequence belongs to the EPSP synthase family. MurA subfamily.

The protein localises to the cytoplasm. The catalysed reaction is phosphoenolpyruvate + UDP-N-acetyl-alpha-D-glucosamine = UDP-N-acetyl-3-O-(1-carboxyvinyl)-alpha-D-glucosamine + phosphate. It participates in cell wall biogenesis; peptidoglycan biosynthesis. Functionally, cell wall formation. Adds enolpyruvyl to UDP-N-acetylglucosamine. This is UDP-N-acetylglucosamine 1-carboxyvinyltransferase from Pseudomonas putida (Arthrobacter siderocapsulatus).